Here is a 207-residue protein sequence, read N- to C-terminus: NADH-quinone oxidoreductase subunit C (207 aa).

The protein belongs to the complex I 30 kDa subunit family. In terms of assembly, NDH-1 is composed of 14 different subunits. Subunits NuoB, C, D, E, F, and G constitute the peripheral sector of the complex.

It is found in the cell inner membrane. It catalyses the reaction a quinone + NADH + 5 H(+)(in) = a quinol + NAD(+) + 4 H(+)(out). Its function is as follows. NDH-1 shuttles electrons from NADH, via FMN and iron-sulfur (Fe-S) centers, to quinones in the respiratory chain. The immediate electron acceptor for the enzyme in this species is believed to be ubiquinone. Couples the redox reaction to proton translocation (for every two electrons transferred, four hydrogen ions are translocated across the cytoplasmic membrane), and thus conserves the redox energy in a proton gradient. The chain is NADH-quinone oxidoreductase subunit C from Thermus thermophilus (strain ATCC BAA-163 / DSM 7039 / HB27).